The following is a 388-amino-acid chain: Ferrochelatase (388 aa).

Residues His196 and Glu277 each coordinate Fe cation.

This sequence belongs to the ferrochelatase family.

The protein resides in the cytoplasm. The catalysed reaction is heme b + 2 H(+) = protoporphyrin IX + Fe(2+). The protein operates within porphyrin-containing compound metabolism; protoheme biosynthesis; protoheme from protoporphyrin-IX: step 1/1. In terms of biological role, catalyzes the ferrous insertion into protoporphyrin IX. This Nostoc sp. (strain PCC 7120 / SAG 25.82 / UTEX 2576) protein is Ferrochelatase.